The chain runs to 247 residues: tRNA pseudouridine synthase A (247 aa).

Asp53 functions as the Nucleophile in the catalytic mechanism. Tyr112 is a substrate binding site.

The protein belongs to the tRNA pseudouridine synthase TruA family. Homodimer.

The catalysed reaction is uridine(38/39/40) in tRNA = pseudouridine(38/39/40) in tRNA. Formation of pseudouridine at positions 38, 39 and 40 in the anticodon stem and loop of transfer RNAs. This chain is tRNA pseudouridine synthase A, found in Anaplasma marginale (strain Florida).